The following is a 358-amino-acid chain: Methionine import ATP-binding protein MetN (358 aa).

The ABC transporter domain occupies valine 14–leucine 255. Glycine 52 to serine 59 is a binding site for ATP.

This sequence belongs to the ABC transporter superfamily. Methionine importer (TC 3.A.1.24) family. The complex is composed of two ATP-binding proteins (MetN), two transmembrane proteins (MetI) and a solute-binding protein (MetQ).

Its subcellular location is the cell inner membrane. The catalysed reaction is L-methionine(out) + ATP + H2O = L-methionine(in) + ADP + phosphate + H(+). It carries out the reaction D-methionine(out) + ATP + H2O = D-methionine(in) + ADP + phosphate + H(+). Its function is as follows. Part of the ABC transporter complex MetNIQ involved in methionine import. Responsible for energy coupling to the transport system. This is Methionine import ATP-binding protein MetN from Rhizobium meliloti (strain 1021) (Ensifer meliloti).